Reading from the N-terminus, the 257-residue chain is Thiazole synthase (257 aa).

Lysine 98 (schiff-base intermediate with DXP) is an active-site residue. Residues glycine 159, 185–186, and 207–208 each bind 1-deoxy-D-xylulose 5-phosphate; these read AG and NT.

This sequence belongs to the ThiG family. As to quaternary structure, homotetramer. Forms heterodimers with either ThiH or ThiS.

It is found in the cytoplasm. The enzyme catalyses [ThiS sulfur-carrier protein]-C-terminal-Gly-aminoethanethioate + 2-iminoacetate + 1-deoxy-D-xylulose 5-phosphate = [ThiS sulfur-carrier protein]-C-terminal Gly-Gly + 2-[(2R,5Z)-2-carboxy-4-methylthiazol-5(2H)-ylidene]ethyl phosphate + 2 H2O + H(+). It functions in the pathway cofactor biosynthesis; thiamine diphosphate biosynthesis. In terms of biological role, catalyzes the rearrangement of 1-deoxy-D-xylulose 5-phosphate (DXP) to produce the thiazole phosphate moiety of thiamine. Sulfur is provided by the thiocarboxylate moiety of the carrier protein ThiS. In vitro, sulfur can be provided by H(2)S. This is Thiazole synthase from Anaeromyxobacter sp. (strain Fw109-5).